A 414-amino-acid polypeptide reads, in one-letter code: Transcriptional repressor protein YY1 (414 aa).

Residues 1–170 (MASGDTLYIA…GGGSSSSGGG (170 aa)) form an interaction with the SMAD1/SMAD4 complex region. The segment at 33-81 (VETIETTVVGEEEEEDDDDEDGGGGDHGGGGGHGHAGHHHHHHHHHHHP) is disordered. Residues 42 to 55 (GEEEEEDDDDEDGG) show a composition bias toward acidic residues. Gly residues predominate over residues 57-66 (GDHGGGGGHG). The segment covering 67–81 (HAGHHHHHHHHHHHP) has biased composition (basic residues). The interval 116–260 (DDSDGLRAED…YSEYMTGKKL (145 aa)) is gly-rich region involved in interaction with HCFC1. Ser-118 carries the post-translational modification Phosphoserine; by CK2. The disordered stretch occupies residues 157 to 203 (GKSGGGGSSSSGGGRVKKGGGKKSGKKSYLSGGAGAAGGGGADPGNK). A compositionally biased stretch (gly residues) spans 158–170 (KSGGGGSSSSGGG). The span at 171–182 (RVKKGGGKKSGK) shows a compositional bias: basic residues. Residues Lys-182 and Lys-183 each participate in a glycyl lysine isopeptide (Lys-Gly) (interchain with G-Cter in SUMO2) cross-link. Residue Ser-187 is modified to Phosphoserine. The span at 188–199 (GGAGAAGGGGAD) shows a compositional bias: gly residues. Glycyl lysine isopeptide (Lys-Gly) (interchain with G-Cter in SUMO2) cross-links involve residues Lys-208 and Lys-230. At Ser-247 the chain carries Phosphoserine. The tract at residues 257–341 (GKKLPPGGIP…KAFVESSKLK (85 aa)) is involved in nuclear matrix association. Glycyl lysine isopeptide (Lys-Gly) (interchain with G-Cter in SUMO2) cross-links involve residues Lys-286 and Lys-288. The tract at residues 295–414 (TIACPHKGCT…LTHAKAKNNQ (120 aa)) is binding to DNA. 3 consecutive C2H2-type zinc fingers follow at residues 296–320 (IACP…LHTH), 325–347 (HVCA…QLVH), and 353–377 (FQCT…VRIH). Cys-298, Cys-303, His-316, His-320, Cys-327, Cys-330, His-343, His-347, Cys-355, Cys-360, His-373, and His-377 together coordinate Zn(2+). An involved in repression of activated transcription region spans residues 333 to 371 (AFVESSKLKRHQLVHTGEKPFQCTFEGCGKRFSLDFNLR). An involved in masking transactivation domain region spans residues 371–397 (RTHVRIHTGDRPYVCPFDGCNKKFAQS). Thr-378 is modified (phosphothreonine). A C2H2-type 4 zinc finger spans residues 383 to 407 (YVCPFDGCNKKFAQSTNLKSHILTH). Residues Cys-385, Cys-390, His-403, and His-407 each contribute to the Zn(2+) site. Residues Lys-409 and Lys-411 each participate in a glycyl lysine isopeptide (Lys-Gly) (interchain with G-Cter in SUMO2) cross-link.

Belongs to the YY transcription factor family. As to quaternary structure, interacts with YAF2 through the region encompassing the first and second zinc fingers. Component of the chromatin remodeling INO80 complex; specifically part of a complex module associated with the DBINO domain of INO80. Interacts with EED and EZH2; the interactions are indicative for an association with the PRC2/EED-EZH2 complex. Interacts with SFMBT2. Found in a complex with SMAD1 and SMAD4. Found in a complex with YY1, SIN3A and HDAC1. Accessory component of the polycomb repressive deubiquitinase (PR-DUB) complex, at least composed of BAP1, one of ASXL1, ASXL2 or (probably) ASXL3 and one of MBD5 or MBD6; the PR-DUB core associates with a number of accessory proteins, including FOXK1, FOXK2, KDM1B, HCFC1, YY1 and OGT. Interacts (via Gly-rich region) with HCFC1; the interaction is direct. Interacts (via C-terminal zinc-finger domains) with BAP1 (via ULD domain); the interaction is direct and requires HCFC1. In terms of processing, phosphorylation at Ser-118 by CK2 prevents proteolytic cleavage by caspase-7 (CASP7) during apoptosis. Proteolytically cleaved by caspase-7 (CASP7) in response to apoptosis. Phosphorylation at Ser-118 protects against proteolytic cleavage. Post-translationally, transiently poly-ADP-ribosylated by PARP1 upon DNA damage, with the effect of decreasing affinity of YY1 to its cognate DNA binding sites. In terms of processing, ubiquitinated.

Its subcellular location is the nucleus matrix. Functionally, multifunctional transcription factor that exhibits positive and negative control on a large number of cellular and viral genes by binding to sites overlapping the transcription start site. Binds to the consensus sequence 5'-CCGCCATNTT-3'; some genes have been shown to contain a longer binding motif allowing enhanced binding; the initial CG dinucleotide can be methylated greatly reducing the binding affinity. The effect on transcription regulation is depending upon the context in which it binds and diverse mechanisms of action include direct activation or repression, indirect activation or repression via cofactor recruitment, or activation or repression by disruption of binding sites or conformational DNA changes. Its activity is regulated by transcription factors and cytoplasmic proteins that have been shown to abrogate or completely inhibit YY1-mediated activation or repression. For example, it acts as a repressor in absence of adenovirus E1A protein but as an activator in its presence. Acts synergistically with the SMAD1 and SMAD4 in bone morphogenetic protein (BMP)-mediated cardiac-specific gene expression. Binds to SMAD binding elements (SBEs) (5'-GTCT/AGAC-3') within BMP response element (BMPRE) of cardiac activating regions. May play an important role in development and differentiation. Proposed to recruit the PRC2/EED-EZH2 complex to target genes that are transcriptional repressed. Involved in DNA repair. In vitro, binds to DNA recombination intermediate structures (Holliday junctions). Plays a role in regulating enhancer activation. Recruits the PR-DUB complex to specific gene-regulatory regions. Its function is as follows. Proposed core component of the chromatin remodeling INO80 complex which is involved in transcriptional regulation, DNA replication and probably DNA repair; proposed to target the INO80 complex to YY1-responsive elements. The sequence is that of Transcriptional repressor protein YY1 (YY1) from Homo sapiens (Human).